The chain runs to 226 residues: 3-dehydroquinate dehydratase (226 aa).

Residues 29–31 and Arg56 each bind 3-dehydroquinate; that span reads EFR. The Proton donor/acceptor role is filled by His120. Residue Lys146 is the Schiff-base intermediate with substrate of the active site. Residues Arg187, Thr208, and Gln212 each coordinate 3-dehydroquinate.

The protein belongs to the type-I 3-dehydroquinase family. In terms of assembly, homodimer.

The enzyme catalyses 3-dehydroquinate = 3-dehydroshikimate + H2O. It participates in metabolic intermediate biosynthesis; chorismate biosynthesis; chorismate from D-erythrose 4-phosphate and phosphoenolpyruvate: step 3/7. Functionally, involved in the third step of the chorismate pathway, which leads to the biosynthesis of aromatic amino acids. Catalyzes the cis-dehydration of 3-dehydroquinate (DHQ) and introduces the first double bond of the aromatic ring to yield 3-dehydroshikimate. This chain is 3-dehydroquinate dehydratase, found in Halobacterium salinarum (strain ATCC 700922 / JCM 11081 / NRC-1) (Halobacterium halobium).